The primary structure comprises 303 residues: tRNA dimethylallyltransferase (303 aa).

Residue 12-19 coordinates ATP; that stretch reads GTTASGKS. Residue 14–19 participates in substrate binding; that stretch reads TASGKS. The interval 37–40 is interaction with substrate tRNA; that stretch reads DSRQ.

Belongs to the IPP transferase family. As to quaternary structure, monomer. Mg(2+) is required as a cofactor.

The catalysed reaction is adenosine(37) in tRNA + dimethylallyl diphosphate = N(6)-dimethylallyladenosine(37) in tRNA + diphosphate. In terms of biological role, catalyzes the transfer of a dimethylallyl group onto the adenine at position 37 in tRNAs that read codons beginning with uridine, leading to the formation of N6-(dimethylallyl)adenosine (i(6)A). In Synechocystis sp. (strain ATCC 27184 / PCC 6803 / Kazusa), this protein is tRNA dimethylallyltransferase.